We begin with the raw amino-acid sequence, 425 residues long: tRNA(Ile)-lysidine synthase (425 aa).

Residue 27-32 participates in ATP binding; it reads SGGLDS.

This sequence belongs to the tRNA(Ile)-lysidine synthase family.

It is found in the cytoplasm. The catalysed reaction is cytidine(34) in tRNA(Ile2) + L-lysine + ATP = lysidine(34) in tRNA(Ile2) + AMP + diphosphate + H(+). Its function is as follows. Ligates lysine onto the cytidine present at position 34 of the AUA codon-specific tRNA(Ile) that contains the anticodon CAU, in an ATP-dependent manner. Cytidine is converted to lysidine, thus changing the amino acid specificity of the tRNA from methionine to isoleucine. The chain is tRNA(Ile)-lysidine synthase from Streptococcus pneumoniae (strain Taiwan19F-14).